A 342-amino-acid polypeptide reads, in one-letter code: S-adenosylmethionine:tRNA ribosyltransferase-isomerase (342 aa).

This sequence belongs to the QueA family. Monomer.

Its subcellular location is the cytoplasm. The enzyme catalyses 7-aminomethyl-7-carbaguanosine(34) in tRNA + S-adenosyl-L-methionine = epoxyqueuosine(34) in tRNA + adenine + L-methionine + 2 H(+). Its pathway is tRNA modification; tRNA-queuosine biosynthesis. In terms of biological role, transfers and isomerizes the ribose moiety from AdoMet to the 7-aminomethyl group of 7-deazaguanine (preQ1-tRNA) to give epoxyqueuosine (oQ-tRNA). This chain is S-adenosylmethionine:tRNA ribosyltransferase-isomerase, found in Geobacillus kaustophilus (strain HTA426).